The sequence spans 306 residues: Glutaminase (306 aa).

Substrate-binding residues include Ser64, Asn115, Glu159, Asn166, Tyr190, Tyr242, and Val260.

The protein belongs to the glutaminase family. As to quaternary structure, homotetramer.

The enzyme catalyses L-glutamine + H2O = L-glutamate + NH4(+). This Vibrio parahaemolyticus serotype O3:K6 (strain RIMD 2210633) protein is Glutaminase.